The sequence spans 983 residues: Inner tegument protein (983 aa).

An interaction with large tegument protein region spans residues 474-983 (LNVNTHFAVQ…TSVSLPPASP (510 aa)). Positions 902 to 932 (PWESAPQPPRLRMTPDTDHEESTAGATSVPE) are disordered. Positions 914–923 (MTPDTDHEES) are enriched in basic and acidic residues.

This sequence belongs to the herpesviridae inner tegument protein family. In terms of assembly, interacts (via C-terminus) with the large tegument protein/LTP (via N-terminus).

Its subcellular location is the virion tegument. It is found in the host cytoplasm. The protein localises to the host nucleus. The protein resides in the host Golgi apparatus. It localises to the host trans-Golgi network. In terms of biological role, plays an essential role in cytoplasmic secondary envelopment during viral egress. Interacts with the capsid via the large tegument protein/LTP and participates in its transport to the host trans-Golgi network (TGN) where secondary envelopment occurs. Modulates tegumentation and capsid accumulation at the viral assembly complex. The sequence is that of Inner tegument protein (UL47) from Homo sapiens (Human).